A 92-amino-acid chain; its full sequence is UPF0213 protein H16_B0156 (92 aa).

One can recognise a GIY-YIG domain in the interval 5–80 (SAWYLYLLEC…KRLSSTQKRA (76 aa)).

The protein belongs to the UPF0213 family.

This Cupriavidus necator (strain ATCC 17699 / DSM 428 / KCTC 22496 / NCIMB 10442 / H16 / Stanier 337) (Ralstonia eutropha) protein is UPF0213 protein H16_B0156.